The sequence spans 108 residues: Cell division topological specificity factor (108 aa).

The protein belongs to the MinE family.

Its function is as follows. Prevents the cell division inhibition by proteins MinC and MinD at internal division sites while permitting inhibition at polar sites. This ensures cell division at the proper site by restricting the formation of a division septum at the midpoint of the long axis of the cell. This chain is Cell division topological specificity factor, found in Prochlorococcus marinus (strain AS9601).